A 40-amino-acid polypeptide reads, in one-letter code: Natriuretic peptide PpNP-a (40 aa).

A propeptide spanning residues 1–8 (SGSKTANI) is cleaved from the precursor. Residues 1–40 (SGSKTANIGDGCFGVPIDHIGSTSGMGCGSPRPKPTPGGS) form a disordered region. A disulfide bond links cysteine 12 and cysteine 28.

It belongs to the natriuretic peptide family. Expressed by the venom gland.

The protein localises to the secreted. Functionally, snake venom natriuretic peptide that targets both NPR1 and NPR2. Exhibits hypotensive and vasodepressor activities. The chain is Natriuretic peptide PpNP-a from Pseudechis porphyriacus (Red-bellied black snake).